A 61-amino-acid polypeptide reads, in one-letter code: Neurotoxin-like protein 1 (61 aa).

Intrachain disulfides connect Cys3–Cys24, Cys17–Cys38, Cys42–Cys53, and Cys54–Cys59.

As to expression, expressed by the venom gland.

It is found in the secreted. The polypeptide is Neurotoxin-like protein 1 (Causus rhombeatus (Rhombic night adder)).